A 92-amino-acid polypeptide reads, in one-letter code: N(2)-fixation sustaining protein CowN (92 aa).

Belongs to the CowN family.

In terms of biological role, is required to sustain N(2)-dependent growth in the presence of low levels of carbon monoxide (CO). Probably acts by protecting the N(2) fixation ability of the nitrogenase complex, which is inactivated in the presence of CO. The protein is N(2)-fixation sustaining protein CowN of Cereibacter sphaeroides (strain ATCC 17025 / ATH 2.4.3) (Rhodobacter sphaeroides).